A 624-amino-acid chain; its full sequence is Polycystin-2-like protein 2 (624 aa).

Over 1 to 31 (MAEASRWHRGGASKHKLHYRKEVEITTTLQE) the chain is Cytoplasmic. Residues 32–52 (LLLYFIFLINLCILTFGMVNP) traverse the membrane as a helical segment. The Extracellular segment spans residues 53–276 (HMYYLNKVMS…YSVKLLRYVS (224 aa)). Residues Asn-115 and Asn-138 are each glycosylated (N-linked (GlcNAc...) asparagine). A helical membrane pass occupies residues 277-297 (YYDYFIASCEITFCIFLFVFT). The Cytoplasmic segment spans residues 298 to 314 (TQEVKKIKEFKSAYFKS). Residues 315–335 (IWNWLELLLLLLCFVAVSFNT) traverse the membrane as a helical segment. Residues 336–360 (YYNVQIFLLLGQLLKSTEKYSDFYF) are Extracellular-facing. Residues 361-381 (LACWHIYYNNIIAITIFFAWI) traverse the membrane as a helical segment. Residues 382–406 (KIFKFISFNKTMSQLSSTLSRCVKD) are Cytoplasmic-facing. A helical transmembrane segment spans residues 407–427 (IVGFAIMFFIIFFAYAQLGFL). Topologically, residues 428–469 (VFGSQVDDFSTFQNSIFAQFRIVLGDFNFAGIQQANPILGPI) are extracellular. The chain crosses the membrane as a helical span at residues 470–490 (YFITFIFFVFFVLLNMFLAII). At 491–624 (NDTYSEVKAD…NQVVRKVSAL (134 aa)) the chain is on the cytoplasmic side. Residues 556–576 (ENEIQNAEQMKKWKERLEKKY) are a coiled coil.

It belongs to the polycystin family. Interacts with TRPC1 and TRPC5. In terms of tissue distribution, expressed only in testis. Expressed also in brain and kidney. As to expression, expressed only in transformed lymphoblasts.

Its subcellular location is the membrane. Exhibits a lower single conductance but no spontaneous channel activity. May function as a regulator of calcium channels or a channel component involving Ca2(+) homeostasis. The protein is Polycystin-2-like protein 2 of Homo sapiens (Human).